A 207-amino-acid polypeptide reads, in one-letter code: Guanylate kinase (207 aa).

The Guanylate kinase-like domain maps to 6-185; it reads GLLIVLSGPS…AKQRIQSIVE (180 aa). Residue 13–20 participates in ATP binding; sequence GPSGVGKG.

It belongs to the guanylate kinase family.

The protein localises to the cytoplasm. The catalysed reaction is GMP + ATP = GDP + ADP. Its function is as follows. Essential for recycling GMP and indirectly, cGMP. In Staphylococcus saprophyticus subsp. saprophyticus (strain ATCC 15305 / DSM 20229 / NCIMB 8711 / NCTC 7292 / S-41), this protein is Guanylate kinase.